The primary structure comprises 500 residues: MSRSLTGALAHGFLGQSPLWYKAIICLFLVLNPLLLVTVGPVAAGWALVLEFIFTLGMALKCYPLMPGGLLLVEALLLQMTTPQALYEELQHNFPVILLLMFMVAGIHFMKELLLFLFSRILLGVRSKAILSLLFCVLSAFLSAFLDALTVTAVIISAAVGFYAVYHRVASGANPREDSALDSDQQVAQLHREDLDQFRAFLRSLLMHGAVGTALGGVCTLVGEPQNLLIGHEMGWHFADFFFKVAPVSLPVLGAGLLTCVLLEKLRLFGYGTLMPEPVRQVLAAYAAEDDAARTQAQRIALWVQGLAALILIICLGLHVAEVGLIGLMVIVLITAFTGITDEHRLGRAFQDAMPFTSLLVVFFAVVAVIHQQQLFSPLISWVLTLPTEQQPGMLYLANGLLSAISDNVFVATIYITEVKQAFLNGGMSREHFETLAVAINTGTNLPSVATPNGQAAFLFLLTSAIAPLIRLSYGRMVWMALPYTVVMGGLGWWAVTYWL.

13 helical membrane passes run 11-31 (HGFL…FLVL), 34-54 (LLLV…EFIF), 58-78 (MALK…ALLL), 96-116 (VILL…LLLF), 129-149 (AILS…LDAL), 150-170 (TVTA…HRVA), 205-225 (LLMH…VGEP), 241-261 (FFFK…LTCV), 311-331 (ILII…LMVI), 350-370 (FQDA…VAVI), 394-414 (MLYL…VATI), 450-470 (ATPN…APLI), and 477-497 (MVWM…WAVT).

This sequence belongs to the NhaB Na(+)/H(+) (TC 2.A.34) antiporter family.

The protein localises to the cell inner membrane. It catalyses the reaction 2 Na(+)(in) + 3 H(+)(out) = 2 Na(+)(out) + 3 H(+)(in). Na(+)/H(+) antiporter that extrudes sodium in exchange for external protons. The polypeptide is Na(+)/H(+) antiporter NhaB (Pseudomonas putida (strain GB-1)).